Here is a 742-residue protein sequence, read N- to C-terminus: MAFRGRGGDRGGGGRGRGGGGGFRGRGGSRGGGSRGGDRGGSRGRGRGGDRGASRGRGRGSSRGGARGGFGPRPSKFNDARLADKDEDGSEEDDISEDESNVSEEEIEGSEEEDEEGEEEAQSGQPYMSLLKSFQSATKSKKRKLDHTEEEGPNKATKTEDDDDSDDEDDDEEVKEDVDAVDEPEEDPQDAPLEDLFDEDDDLDDSDPFETHFAAPDEATFQARIKAVQANKWRTDRIAQNSNRIYYNTPETGDSTERKLPHSISGVADLKLKKKLAESMAKHTEFDEAEKAVAPLLFNYQDMLYCNRTVASSESIRRMACLHALNHVFKTRDRVIKNNTKLQRDDTLELRDQGFTRPKVLMLLPTRQSCVKMVEMICEVASPEQQEHRKRFDEGYVDKSTKFSDDKPEDFRDLFSGSDDDMFRLGMKFTRKTIKYFSQFYNSDIIFASPLGLRMAIGSEEEKKKLDYDFLSSIELVIVDQADALLMQNWEHVEFIFEHLNLQPRDAHGCDFSRVRPWYLDDQAKYFRQTVIFSAFNTPELAELQRLHCHNWAGKARLHPEYPGVIQYLGVKTRQTFSRFDAGSIAADPDARFAYFTKAIVPTLVKRAKDAAGTLIFIPSYLDFVRVRNYFANNPDVASVTFGNISEYADTPEASRARSHFLTGRHRVLLYTERAHHFRRYAIKGVKRVIFTKSEQSLMLEHGLGTVKVMFSKYDIMKLERIVGTKRAGKMITEQGDTFDFV.

The disordered stretch occupies residues 1 to 214 (MAFRGRGGDR…DSDPFETHFA (214 aa)). The segment covering 10 to 35 (RGGGGRGRGGGGGFRGRGGSRGGGSR) has biased composition (gly residues). Residues 36–53 (GGDRGGSRGRGRGGDRGA) show a composition bias toward basic and acidic residues. Residues 61-71 (SSRGGARGGFG) show a composition bias toward gly residues. Positions 85-121 (KDEDGSEEDDISEDESNVSEEEIEGSEEEDEEGEEEA) are enriched in acidic residues. The span at 122–138 (QSGQPYMSLLKSFQSAT) shows a compositional bias: polar residues. The segment covering 146–159 (DHTEEEGPNKATKT) has biased composition (basic and acidic residues). The span at 160–208 (EDDDDSDDEDDDEEVKEDVDAVDEPEEDPQDAPLEDLFDEDDDLDDSDP) shows a compositional bias: acidic residues.

This sequence belongs to the UTP25 family. As to quaternary structure, component of the ribosomal small subunit (SSU) processome composed of at least 40 protein subunits and snoRNA U3.

Its subcellular location is the nucleus. The protein resides in the nucleolus. Its function is as follows. DEAD-box RNA helicase-like protein required for pre-18S rRNA processing, specifically at sites A0, A1, and A2. In Sordaria macrospora (strain ATCC MYA-333 / DSM 997 / K(L3346) / K-hell), this protein is U3 small nucleolar RNA-associated protein 25 (UTP25).